The chain runs to 342 residues: S-adenosylmethionine:tRNA ribosyltransferase-isomerase (342 aa).

This sequence belongs to the QueA family. As to quaternary structure, monomer.

The protein resides in the cytoplasm. It carries out the reaction 7-aminomethyl-7-carbaguanosine(34) in tRNA + S-adenosyl-L-methionine = epoxyqueuosine(34) in tRNA + adenine + L-methionine + 2 H(+). It participates in tRNA modification; tRNA-queuosine biosynthesis. Functionally, transfers and isomerizes the ribose moiety from AdoMet to the 7-aminomethyl group of 7-deazaguanine (preQ1-tRNA) to give epoxyqueuosine (oQ-tRNA). The chain is S-adenosylmethionine:tRNA ribosyltransferase-isomerase from Listeria monocytogenes serotype 4a (strain HCC23).